We begin with the raw amino-acid sequence, 477 residues long: 3-isopropylmalate dehydratase large subunit (477 aa).

Cys-352, Cys-413, and Cys-416 together coordinate [4Fe-4S] cluster.

This sequence belongs to the aconitase/IPM isomerase family. LeuC type 1 subfamily. In terms of assembly, heterodimer of LeuC and LeuD. [4Fe-4S] cluster is required as a cofactor.

It catalyses the reaction (2R,3S)-3-isopropylmalate = (2S)-2-isopropylmalate. The protein operates within amino-acid biosynthesis; L-leucine biosynthesis; L-leucine from 3-methyl-2-oxobutanoate: step 2/4. Its function is as follows. Catalyzes the isomerization between 2-isopropylmalate and 3-isopropylmalate, via the formation of 2-isopropylmaleate. This Pseudomonas putida (strain W619) protein is 3-isopropylmalate dehydratase large subunit.